Reading from the N-terminus, the 293-residue chain is MTGKTQTSNVTNKNDPKSINSRVFIGNLNTAIVKKVDIEAIFSKYGKIVGCSVHKGYAFVQYMSERHARAAVAGENARIIAGQPLDINMAGEPKPYRPKPGNKRPISALYRLESKEPFLSVGGYVFDYDYYRDDFYNRLFDYHGRVPPPPRAVIPLKRPRAAVTTTRRGKGVFSMKGGSRSAVSGSSSSGSKLKSDELQTIKKELTQIKTKIDSLLGRLEKIEKQQKAEAEAQKKQLEASLELIQDECVSENADHSAEEPAEGAPDADGEELTDGVEEDFDEDGAHELFLQIK.

Positions 21-92 constitute an RRM domain; that stretch reads SRVFIGNLNT…QPLDINMAGE (72 aa). Disordered regions lie at residues 159–195 and 245–293; these read PRAA…KLKS and QDEC…LQIK. The segment covering 176-192 has biased composition (low complexity); sequence KGGSRSAVSGSSSSGSK. Residues 192-254 adopt a coiled-coil conformation; the sequence is KLKSDELQTI…QDECVSENAD (63 aa). Over residues 259 to 284 the composition is skewed to acidic residues; the sequence is EPAEGAPDADGEELTDGVEEDFDEDG.

It belongs to the RRM HNRPC family. RALY subfamily.

The chain is RNA-binding Raly-like protein (RALYL) from Bos taurus (Bovine).